We begin with the raw amino-acid sequence, 86 residues long: Small ribosomal subunit protein bS16 (86 aa).

It belongs to the bacterial ribosomal protein bS16 family.

This is Small ribosomal subunit protein bS16 from Bordetella petrii (strain ATCC BAA-461 / DSM 12804 / CCUG 43448).